Here is a 288-residue protein sequence, read N- to C-terminus: MPIVFEAVSHIYQPGTPFAWKALDDVSLTIPDGEFWGIIGPTGSGKSTLIQHMNGLLRPTTGRVLVDGLDLSDRKTDLRKVRQRVGLVFQYPEHQLFGETIFEDVAFGPRNMQLGAAEVERRVMTALERVGLDPAMKDRSPFGLSGGQARRVALAGVLAMEPRVLILDEPTAGLDPQGRREILDLVGGFARTGMTVVLVSHSMDDVAEYADRVLVMHRGRVHMLGTPWELFARRAELEAIGLGVPAAVALADKLRERGWSIPPDVVTMDEAVAAIRGVLAGRKGADRP.

The ABC transporter domain occupies 3–243 (IVFEAVSHIY…RAELEAIGLG (241 aa)). Residue 40 to 47 (GPTGSGKS) coordinates ATP.

Belongs to the ABC transporter superfamily. Energy-coupling factor EcfA family. In terms of assembly, forms a stable energy-coupling factor (ECF) transporter complex composed of 2 membrane-embedded substrate-binding proteins (S component), 2 ATP-binding proteins (A component) and 2 transmembrane proteins (T component).

It is found in the cell membrane. In terms of biological role, ATP-binding (A) component of a common energy-coupling factor (ECF) ABC-transporter complex. Unlike classic ABC transporters this ECF transporter provides the energy necessary to transport a number of different substrates. This Symbiobacterium thermophilum (strain DSM 24528 / JCM 14929 / IAM 14863 / T) protein is Energy-coupling factor transporter ATP-binding protein EcfA2.